The following is a 186-amino-acid chain: 19 kDa globulin (186 aa).

The signal sequence occupies residues 1–22 (MASKVVFFAAALMAAMVAISGA). A disordered region spans residues 108 to 155 (PLEQGWSSSSSEYYGGEGSSSEQGYYGEGSSEEGYYGEQQQQPGMTRV). Residues 110-149 (EQGWSSSSSEYYGGEGSSSEQGYYGEGSSEEGYYGEQQQQ) are compositionally biased toward low complexity.

This sequence belongs to the 2S seed storage albumins family.

It is found in the secreted. Its function is as follows. Seed storage protein. The chain is 19 kDa globulin from Oryza sativa subsp. japonica (Rice).